The sequence spans 748 residues: Catalase-peroxidase (748 aa).

The span at 1–14 shows a compositional bias: basic and acidic residues; it reads MTDTSDARPPHSDA. Residues 1–40 are disordered; it reads MTDTSDARPPHSDAKTASNSESENPAIDSPEPKSHAPLTN. Residues 112-239 constitute a cross-link (tryptophyl-tyrosyl-methioninium (Trp-Tyr) (with M-265)); that stretch reads WHAAGTYRIF…FGATTMGLIY (128 aa). Catalysis depends on H113, which acts as the Proton acceptor. Residues 239–265 constitute a cross-link (tryptophyl-tyrosyl-methioninium (Tyr-Met) (with W-112)); it reads YVNPEGPEGKPDPLAAAHDIRETFGRM. H280 is a binding site for heme b.

Belongs to the peroxidase family. Peroxidase/catalase subfamily. Homodimer or homotetramer. Heme b is required as a cofactor. Post-translationally, formation of the three residue Trp-Tyr-Met cross-link is important for the catalase, but not the peroxidase activity of the enzyme.

It catalyses the reaction H2O2 + AH2 = A + 2 H2O. It carries out the reaction 2 H2O2 = O2 + 2 H2O. In terms of biological role, bifunctional enzyme with both catalase and broad-spectrum peroxidase activity. This Mycolicibacterium gilvum (strain PYR-GCK) (Mycobacterium gilvum (strain PYR-GCK)) protein is Catalase-peroxidase.